A 416-amino-acid chain; its full sequence is Neurotensin receptor type 2 (416 aa).

Residues 1 to 32 (METSSPWPPRPSPSAGLSLEARLGVDTRLWAK) are Extracellular-facing. The chain crosses the membrane as a helical span at residues 33-55 (VLFTALYSLIFAFGTAGNALSVH). Topologically, residues 56–64 (VVLKARAGR) are cytoplasmic. The chain crosses the membrane as a helical span at residues 65–87 (PGRLRYHVLSLALSALLLLLVSM). Topologically, residues 88–109 (PMELYNFVWSHYPWVFGDLGCR) are extracellular. A disulfide bridge links C108 with C194. A helical membrane pass occupies residues 110–131 (GYYFVRELCAYATVLSVASLSA). At 132–154 (ERCLAVCQPLRARRLLTPRRTRR) the chain is on the cytoplasmic side. A helical transmembrane segment spans residues 155–176 (LLSLVWVASLGLALPMAVIMGQ). The Extracellular segment spans residues 177–216 (KHEVESADGEPEPASRVCTVLVSRATLQVFIQVNVLVSFA). Residues 217 to 237 (LPLALTAFLNGITVNHLMALY) form a helical membrane-spanning segment. Residues 238–297 (SQVPSASAQVSSIPSRLELLSEEGLLGFITWRKTLSLGVQASLVRHKDASQIRSLQHSAQ) lie on the Cytoplasmic side of the membrane. The helical transmembrane segment at 298-318 (VLRAIVAVYVICWLPYHARRL) threads the bilayer. At 319–337 (MYCYIPDDGWTNELYDFYH) the chain is on the extracellular side. The helical transmembrane segment at 338–358 (YFYMVTNTLFYVSSAVTPILY) threads the bilayer. Topologically, residues 359–416 (NAVSSSFRKLFLESLGSLCGEQHSLVPLPQEAPESTTSTYSFRLWGSPRNPSLGEIQV) are cytoplasmic. C377 carries S-palmitoyl cysteine lipidation. S410 carries the phosphoserine modification.

Belongs to the G-protein coupled receptor 1 family. Neurotensin receptor subfamily. NTSR2 sub-subfamily. Abundant in cortex and hypothalamus, and lower levels seen in the heart and intestine.

The protein localises to the cell membrane. Receptor for the tridecapeptide neurotensin. It is associated with G proteins that activate a phosphatidylinositol-calcium second messenger system. The protein is Neurotensin receptor type 2 (Ntsr2) of Rattus norvegicus (Rat).